A 447-amino-acid polypeptide reads, in one-letter code: Na(+)-translocating NADH-quinone reductase subunit A (447 aa).

Belongs to the NqrA family. Composed of six subunits; NqrA, NqrB, NqrC, NqrD, NqrE and NqrF.

It carries out the reaction a ubiquinone + n Na(+)(in) + NADH + H(+) = a ubiquinol + n Na(+)(out) + NAD(+). In terms of biological role, NQR complex catalyzes the reduction of ubiquinone-1 to ubiquinol by two successive reactions, coupled with the transport of Na(+) ions from the cytoplasm to the periplasm. NqrA to NqrE are probably involved in the second step, the conversion of ubisemiquinone to ubiquinol. This is Na(+)-translocating NADH-quinone reductase subunit A from Neisseria gonorrhoeae (strain NCCP11945).